Reading from the N-terminus, the 453-residue chain is Bifunctional protein GlmU (453 aa).

Positions 1–226 are pyrophosphorylase; the sequence is MKFSAVILAA…PIEVEGVNDR (226 aa). Residues 8–11, Lys-22, Gln-73, 78–79, 100–102, Gly-137, Glu-151, Asn-166, and Asn-224 contribute to the UDP-N-acetyl-alpha-D-glucosamine site; these read LAAG, GT, and YGD. Mg(2+) is bound at residue Asp-102. Residue Asn-224 participates in Mg(2+) binding. Residues 227–247 form a linker region; sequence AQLARLERAFQAAQAKKLLEQ. Positions 248 to 453 are N-acetyltransferase; sequence GVMLRDPARF…TGWQRPVKKK (206 aa). Residues Arg-330 and Lys-348 each contribute to the UDP-N-acetyl-alpha-D-glucosamine site. Residue His-360 is the Proton acceptor of the active site. UDP-N-acetyl-alpha-D-glucosamine is bound by residues Tyr-363 and Asn-374. Residues Ala-377, 383–384, Ser-402, Ala-420, and Arg-437 each bind acetyl-CoA; that span reads NY.

In the N-terminal section; belongs to the N-acetylglucosamine-1-phosphate uridyltransferase family. It in the C-terminal section; belongs to the transferase hexapeptide repeat family. In terms of assembly, homotrimer. Mg(2+) serves as cofactor.

The protein localises to the cytoplasm. The catalysed reaction is alpha-D-glucosamine 1-phosphate + acetyl-CoA = N-acetyl-alpha-D-glucosamine 1-phosphate + CoA + H(+). The enzyme catalyses N-acetyl-alpha-D-glucosamine 1-phosphate + UTP + H(+) = UDP-N-acetyl-alpha-D-glucosamine + diphosphate. The protein operates within nucleotide-sugar biosynthesis; UDP-N-acetyl-alpha-D-glucosamine biosynthesis; N-acetyl-alpha-D-glucosamine 1-phosphate from alpha-D-glucosamine 6-phosphate (route II): step 2/2. It functions in the pathway nucleotide-sugar biosynthesis; UDP-N-acetyl-alpha-D-glucosamine biosynthesis; UDP-N-acetyl-alpha-D-glucosamine from N-acetyl-alpha-D-glucosamine 1-phosphate: step 1/1. It participates in bacterial outer membrane biogenesis; LPS lipid A biosynthesis. In terms of biological role, catalyzes the last two sequential reactions in the de novo biosynthetic pathway for UDP-N-acetylglucosamine (UDP-GlcNAc). The C-terminal domain catalyzes the transfer of acetyl group from acetyl coenzyme A to glucosamine-1-phosphate (GlcN-1-P) to produce N-acetylglucosamine-1-phosphate (GlcNAc-1-P), which is converted into UDP-GlcNAc by the transfer of uridine 5-monophosphate (from uridine 5-triphosphate), a reaction catalyzed by the N-terminal domain. In Vibrio vulnificus (strain CMCP6), this protein is Bifunctional protein GlmU.